The sequence spans 495 residues: Glycerol kinase (495 aa).

T11 is an ADP binding site. Positions 11, 12, and 13 each coordinate ATP. T11 is a sn-glycerol 3-phosphate binding site. An ADP-binding site is contributed by R15. 4 residues coordinate sn-glycerol 3-phosphate: R81, E82, Y133, and D242. Glycerol-binding residues include R81, E82, Y133, D242, and Q243. ADP-binding residues include T264 and G307. ATP is bound by residues T264, G307, Q311, and G408. Residues G408 and N412 each contribute to the ADP site.

This sequence belongs to the FGGY kinase family.

The catalysed reaction is glycerol + ATP = sn-glycerol 3-phosphate + ADP + H(+). The protein operates within polyol metabolism; glycerol degradation via glycerol kinase pathway; sn-glycerol 3-phosphate from glycerol: step 1/1. Inhibited by fructose 1,6-bisphosphate (FBP). In terms of biological role, key enzyme in the regulation of glycerol uptake and metabolism. Catalyzes the phosphorylation of glycerol to yield sn-glycerol 3-phosphate. The chain is Glycerol kinase from Acinetobacter baylyi (strain ATCC 33305 / BD413 / ADP1).